Here is a 259-residue protein sequence, read N- to C-terminus: F-box/kelch-repeat protein At2g22050 (259 aa).

Basic residues predominate over residues 1–12 (MSPSSKKFKKQS). Residues 1–29 (MSPSSKKFKKQSSSKSVKPPLEDNDPSLP) are disordered. In terms of domain architecture, F-box spans 28-76 (LPSFTSLPDEIVLDCLQRVPRSYYLNLCRVSKTLRSLVRSPELSRLRTL). The stretch at 142 to 186 (EIYFVGGSFEPMSELWILDTRTGMFRQGPSMKVARTDEASVGVIN) is one Kelch repeat.

This Arabidopsis thaliana (Mouse-ear cress) protein is F-box/kelch-repeat protein At2g22050.